A 463-amino-acid polypeptide reads, in one-letter code: MASTPSLLRLALLLLGAVGRAGPRPQGTTVSLSETVQKWREYRRQCQRFLTEAPLLATGLFCNRTFDDYACWPDGPPGSFVNVSCPWYLPWASSVLQGHVYRFCTAEGLWLHKDNSSLPWRDLSECEESKRGERNFPEEQLLSLYIIYTVGYALSFSALVIASAILVGFRHLHCTRNYIHLNLFASFILRALSVFIKDAALKWMYSTAAQQHQWDGLLSYQDSLGCRLVFLLMQYCVAANYYWLLVEGVYLYTLLAFSVFSEQRIFKLYLSIGWGVPLLFVIPWGIVKYLYEDEGCWTRNSNMNYWLIIRLPILFAIGVNFLIFIRVICIVVSKLKANLMCKTDIKCRLAKSTLTLIPLLGTHEVIFAFVMDEHARGTLRFIKLFTELSFTSFQGLMVAILYCFVNNEVQMEFRKCWERWRLEHLNIQRDCSMKPLKCPTSSVSSGATVGSSVYAATCQSSYS.

Positions 1-21 are cleaved as a signal peptide; it reads MASTPSLLRLALLLLGAVGRA. The Extracellular portion of the chain corresponds to 22–139; the sequence is GPRPQGTTVS…KRGERNFPEE (118 aa). 3 cysteine pairs are disulfide-bonded: Cys46-Cys71, Cys62-Cys104, and Cys85-Cys126. N-linked (GlcNAc...) asparagine glycosylation is found at Asn63, Asn82, and Asn115. Residues 140–164 traverse the membrane as a helical segment; the sequence is QLLSLYIIYTVGYALSFSALVIASA. Over 165-175 the chain is Cytoplasmic; the sequence is ILVGFRHLHCT. A helical transmembrane segment spans residues 176 to 201; it reads RNYIHLNLFASFILRALSVFIKDAAL. Residues 202 to 227 lie on the Extracellular side of the membrane; it reads KWMYSTAAQQHQWDGLLSYQDSLGCR. A disulfide bridge links Cys226 with Cys296. The chain crosses the membrane as a helical span at residues 228-251; that stretch reads LVFLLMQYCVAANYYWLLVEGVYL. Residues 252–265 are Cytoplasmic-facing; that stretch reads YTLLAFSVFSEQRI. The helical transmembrane segment at 266-290 threads the bilayer; it reads FKLYLSIGWGVPLLFVIPWGIVKYL. At 291 to 305 the chain is on the extracellular side; it reads YEDEGCWTRNSNMNY. A helical transmembrane segment spans residues 306–328; that stretch reads WLIIRLPILFAIGVNFLIFIRVI. Topologically, residues 329-348 are cytoplasmic; sequence CIVVSKLKANLMCKTDIKCR. Cys341 carries the ADP-ribosylcysteine modification. Arg348 is modified (ADP-ribosylarginine). Residues 349–370 traverse the membrane as a helical segment; it reads LAKSTLTLIPLLGTHEVIFAFV. Positions 352–355 are important for allosteric inhibitor binding; sequence STLT. At 371 to 383 the chain is on the extracellular side; the sequence is MDEHARGTLRFIK. The chain crosses the membrane as a helical span at residues 384-404; the sequence is LFTELSFTSFQGLMVAILYCF. Topologically, residues 405–463 are cytoplasmic; that stretch reads VNNEVQMEFRKCWERWRLEHLNIQRDCSMKPLKCPTSSVSSGATVGSSVYAATCQSSYS.

The protein belongs to the G-protein coupled receptor 2 family. May form homodimers and heterodimers with GIPR. N-glycosylation enhances cell surface expression and lengthens receptor half-life by preventing degradation in the ER. As to expression, detected in pancreatic islets (at protein level). Detected in pancreatic islets and lungs.

The protein localises to the cell membrane. In terms of biological role, G-protein coupled receptor for glucagon-like peptide 1 (GLP-1). Ligand binding triggers activation of a signaling cascade that leads to the activation of adenylyl cyclase and increased intracellular cAMP levels. Plays a role in regulating insulin secretion in response to GLP-1. This Mus musculus (Mouse) protein is Glucagon-like peptide 1 receptor (Glp1r).